The sequence spans 243 residues: Juxtaposed with another zinc finger protein 1 (243 aa).

The C2H2-type 1 zinc finger occupies 12–37; the sequence is NTCRFGGCGLHFPTLADLIEHIEDNH. The tract at residues 39 to 79 is required for interaction with NR2C2; it reads DTDPRVLEKQELQQPTYVALSYINRFMTDAARREQESLKKK. A compositionally biased stretch (polar residues) spans 89–108; that stretch reads SSSVSRGNVSTPPRHSSGSL. The tract at residues 89–151 is disordered; that stretch reads SSSVSRGNVS…SDSDESWTTE (63 aa). Phosphothreonine is present on residues T109 and T113. The segment covering 118–130 has biased composition (low complexity); sequence PSSSFRSSTPTGS. Residues 131 to 148 show a composition bias toward acidic residues; that stretch reads EYDEEEVDYEESDSDESW. The C2H2-type 2 zinc finger occupies 173 to 198; it reads FACPVPGCKKRYKNVNGIKYHAKNGH. The C2H2-type 3; degenerate zinc-finger motif lies at 208 to 230; sequence FKCRCGKSYKTAQGLRHHTINFH.

Interacts with NR2C2 (via ligand-binding region). As to expression, highest expression in testis with moderate levels in colon, placenta, prostate and ovary and low levels in brain, spleen, liver and small intestine.

It is found in the nucleus. In terms of biological role, acts as a transcriptional corepressor of orphan nuclear receptor NR2C2. Inhibits expression of the gluconeogenesis enzyme PCK2 through inhibition of NR2C2 activity. Also involved in transcriptional activation of NAMPT by promoting expression of PPARA and PPARD. Plays a role in lipid metabolism by suppressing lipogenesis, increasing lipolysis and decreasing lipid accumulation in adipose tissue. Plays a role in glucose homeostasis by improving glucose metabolism and insulin sensitivity. This chain is Juxtaposed with another zinc finger protein 1, found in Homo sapiens (Human).